Reading from the N-terminus, the 309-residue chain is 4-hydroxy-3-methylbut-2-enyl diphosphate reductase (309 aa).

[4Fe-4S] cluster is bound at residue cysteine 12. Histidine 43 and histidine 77 together coordinate (2E)-4-hydroxy-3-methylbut-2-enyl diphosphate. Residues histidine 43 and histidine 77 each coordinate dimethylallyl diphosphate. Positions 43 and 77 each coordinate isopentenyl diphosphate. Position 99 (cysteine 99) interacts with [4Fe-4S] cluster. A (2E)-4-hydroxy-3-methylbut-2-enyl diphosphate-binding site is contributed by histidine 127. Histidine 127 contributes to the dimethylallyl diphosphate binding site. Isopentenyl diphosphate is bound at residue histidine 127. Catalysis depends on glutamate 129, which acts as the Proton donor. Threonine 167 is a binding site for (2E)-4-hydroxy-3-methylbut-2-enyl diphosphate. Residue cysteine 197 participates in [4Fe-4S] cluster binding. 4 residues coordinate (2E)-4-hydroxy-3-methylbut-2-enyl diphosphate: serine 225, serine 226, asparagine 227, and serine 269. 4 residues coordinate dimethylallyl diphosphate: serine 225, serine 226, asparagine 227, and serine 269. 4 residues coordinate isopentenyl diphosphate: serine 225, serine 226, asparagine 227, and serine 269.

This sequence belongs to the IspH family. The cofactor is [4Fe-4S] cluster.

It catalyses the reaction isopentenyl diphosphate + 2 oxidized [2Fe-2S]-[ferredoxin] + H2O = (2E)-4-hydroxy-3-methylbut-2-enyl diphosphate + 2 reduced [2Fe-2S]-[ferredoxin] + 2 H(+). The catalysed reaction is dimethylallyl diphosphate + 2 oxidized [2Fe-2S]-[ferredoxin] + H2O = (2E)-4-hydroxy-3-methylbut-2-enyl diphosphate + 2 reduced [2Fe-2S]-[ferredoxin] + 2 H(+). It participates in isoprenoid biosynthesis; dimethylallyl diphosphate biosynthesis; dimethylallyl diphosphate from (2E)-4-hydroxy-3-methylbutenyl diphosphate: step 1/1. It functions in the pathway isoprenoid biosynthesis; isopentenyl diphosphate biosynthesis via DXP pathway; isopentenyl diphosphate from 1-deoxy-D-xylulose 5-phosphate: step 6/6. Catalyzes the conversion of 1-hydroxy-2-methyl-2-(E)-butenyl 4-diphosphate (HMBPP) into a mixture of isopentenyl diphosphate (IPP) and dimethylallyl diphosphate (DMAPP). Acts in the terminal step of the DOXP/MEP pathway for isoprenoid precursor biosynthesis. The protein is 4-hydroxy-3-methylbut-2-enyl diphosphate reductase of Wolbachia pipientis wMel.